We begin with the raw amino-acid sequence, 1117 residues long: Cytospin-A (1117 aa).

Disordered stretches follow at residues 1–176, 293–323, and 358–390; these read MKKA…NQIS, SLSPEITPGNQSDGGGTLTSSVEGSAPGSVE, and SSDDALDAPSSSESEGIPSIERSRKGSSGNASE. The span at 45–90 shows a compositional bias: low complexity; that stretch reads TAASLSKTKSSDDLLAGMAGGVTVTNGVKGKKSTCPSAAPSASAPA. Residues 93 to 117 are compositionally biased toward polar residues; that stretch reads TVENKSKISTGTASSTKRSTSTGNK. Basic and acidic residues-rich tracts occupy residues 120 to 131 and 158 to 171; these read SSTRERLRERTR and TATECDVRMSKSKS. A coiled-coil region spans residues 168-280; sequence KSKSDNQISD…LNALGFSLEQ (113 aa). Residues 293–303 show a composition bias toward polar residues; the sequence is SLSPEITPGNQ. Over residues 358 to 377 the composition is skewed to low complexity; that stretch reads SSDDALDAPSSSESEGIPSI. A phosphoserine mark is found at Ser384, Ser385, and Ser389. Coiled-coil stretches lie at residues 394–449 and 487–807; these read ACLT…MESL and RYME…RGRV. Phosphoserine occurs at positions 868, 881, and 887. Residues 920-997 form a disordered region; sequence TSSASRPASL…PTTRSRIREE (78 aa). The segment covering 946-956 has biased composition (basic and acidic residues); sequence RSSEEVKRDIS. Over residues 971–990 the composition is skewed to low complexity; sequence TTSPQLSLSSSPTASVTPTT. The Calponin-homology (CH) domain occupies 1011–1116; it reads GSKRNALLKW…YVTAIYKYFE (106 aa).

Belongs to the cytospin-A family. In terms of assembly, may interact with both microtubules and actin cytoskeleton.

It is found in the cytoplasm. Its subcellular location is the cytoskeleton. It localises to the spindle. The protein resides in the cell junction. The protein localises to the gap junction. Involved in cytokinesis and spindle organization. May play a role in actin cytoskeleton organization and microtubule stabilization and hence required for proper cell adhesion and migration. The chain is Cytospin-A (SPECC1L) from Homo sapiens (Human).